We begin with the raw amino-acid sequence, 227 residues long: Translation initiation factor 6 (227 aa).

It belongs to the eIF-6 family.

In terms of biological role, binds to the 50S ribosomal subunit and prevents its association with the 30S ribosomal subunit to form the 70S initiation complex. This chain is Translation initiation factor 6, found in Methanococcus maripaludis (strain DSM 14266 / JCM 13030 / NBRC 101832 / S2 / LL).